We begin with the raw amino-acid sequence, 346 residues long: Histidinol-phosphate aminotransferase (346 aa).

Lys209 is modified (N6-(pyridoxal phosphate)lysine).

Belongs to the class-II pyridoxal-phosphate-dependent aminotransferase family. Histidinol-phosphate aminotransferase subfamily. In terms of assembly, homodimer. Pyridoxal 5'-phosphate is required as a cofactor.

It catalyses the reaction L-histidinol phosphate + 2-oxoglutarate = 3-(imidazol-4-yl)-2-oxopropyl phosphate + L-glutamate. Its pathway is amino-acid biosynthesis; L-histidine biosynthesis; L-histidine from 5-phospho-alpha-D-ribose 1-diphosphate: step 7/9. The chain is Histidinol-phosphate aminotransferase from Vibrio campbellii (strain ATCC BAA-1116).